A 535-amino-acid polypeptide reads, in one-letter code: CTP synthase (535 aa).

The interval 1-267 is amidoligase domain; that stretch reads MTKYIFVTGG…DKLVCEHMKL (267 aa). A CTP-binding site is contributed by serine 13. A UTP-binding site is contributed by serine 13. 14–19 contacts ATP; the sequence is SLGKGI. Tyrosine 54 lines the L-glutamine pocket. Aspartate 71 provides a ligand contact to ATP. Mg(2+)-binding residues include aspartate 71 and glutamate 141. CTP is bound by residues 148–150, 188–193, and lysine 224; these read DIE and KTKPTQ. UTP-binding positions include 188–193 and lysine 224; that span reads KTKPTQ. One can recognise a Glutamine amidotransferase type-1 domain in the interval 292–534; that stretch reads TIGLVGKYVE…IGASVEAANQ (243 aa). Glycine 354 is an L-glutamine binding site. Cysteine 381 (nucleophile; for glutamine hydrolysis) is an active-site residue. L-glutamine is bound by residues 382-385, glutamate 405, and arginine 462; that span reads LGMQ. Active-site residues include histidine 507 and glutamate 509.

This sequence belongs to the CTP synthase family. As to quaternary structure, homotetramer. Interacts with BrxC.

The catalysed reaction is UTP + L-glutamine + ATP + H2O = CTP + L-glutamate + ADP + phosphate + 2 H(+). It catalyses the reaction L-glutamine + H2O = L-glutamate + NH4(+). The enzyme catalyses UTP + NH4(+) + ATP = CTP + ADP + phosphate + 2 H(+). It functions in the pathway pyrimidine metabolism; CTP biosynthesis via de novo pathway; CTP from UDP: step 2/2. With respect to regulation, allosterically activated by GTP, when glutamine is the substrate; GTP has no effect on the reaction when ammonia is the substrate. The allosteric effector GTP functions by stabilizing the protein conformation that binds the tetrahedral intermediate(s) formed during glutamine hydrolysis. Inhibited by the product CTP, via allosteric rather than competitive inhibition. Functionally, catalyzes the ATP-dependent amination of UTP to CTP with either L-glutamine or ammonia as the source of nitrogen. Regulates intracellular CTP levels through interactions with the four ribonucleotide triphosphates. This chain is CTP synthase, found in Bacillus subtilis (strain 168).